The sequence spans 537 residues: Cytochrome P450 monooxygenase alt2 (537 aa).

Residues 4–24 traverse the membrane as a helical segment; the sequence is HLLILAAVVLLIIHIVNNFLI. Residue C474 participates in heme binding.

It belongs to the cytochrome P450 family. Heme is required as a cofactor.

The protein resides in the membrane. It participates in secondary metabolite biosynthesis. In terms of biological role, cytochrome P450 monooxygenase; part of the gene cluster that mediates the biosynthesis of alternapyrone derivatives. Alternapyrone is a decaketide with octa-methylation from methionine on every C2 unit except the third unit. All the domains in the polyketide synthase alt5 are apparently involved in alternapyrone synthesis, that is, the 8 CMeT, 7 KR, 7 DH, and 4 ER reactions in the 9 KS-mediated condensation steps required for alternapyrone synthesis. the alternapyrone produced by alt5 might be intensively modified by cytochrome P450 monooxygenases alt1, alt2 and alt3 and FAD-dependent oxidoreductase alt4 present in the alt gene cluster. The chain is Cytochrome P450 monooxygenase alt2 from Alternaria solani.